The primary structure comprises 435 residues: UDP-N-acetylmuramate--L-alanine ligase (435 aa).

An ATP-binding site is contributed by Gly108 to Ser114.

Belongs to the MurCDEF family.

Its subcellular location is the cytoplasm. It catalyses the reaction UDP-N-acetyl-alpha-D-muramate + L-alanine + ATP = UDP-N-acetyl-alpha-D-muramoyl-L-alanine + ADP + phosphate + H(+). The protein operates within cell wall biogenesis; peptidoglycan biosynthesis. Its function is as follows. Cell wall formation. The sequence is that of UDP-N-acetylmuramate--L-alanine ligase from Shouchella clausii (strain KSM-K16) (Alkalihalobacillus clausii).